Consider the following 157-residue polypeptide: SsrA-binding protein (157 aa).

Belongs to the SmpB family.

It is found in the cytoplasm. Its function is as follows. Required for rescue of stalled ribosomes mediated by trans-translation. Binds to transfer-messenger RNA (tmRNA), required for stable association of tmRNA with ribosomes. tmRNA and SmpB together mimic tRNA shape, replacing the anticodon stem-loop with SmpB. tmRNA is encoded by the ssrA gene; the 2 termini fold to resemble tRNA(Ala) and it encodes a 'tag peptide', a short internal open reading frame. During trans-translation Ala-aminoacylated tmRNA acts like a tRNA, entering the A-site of stalled ribosomes, displacing the stalled mRNA. The ribosome then switches to translate the ORF on the tmRNA; the nascent peptide is terminated with the 'tag peptide' encoded by the tmRNA and targeted for degradation. The ribosome is freed to recommence translation, which seems to be the essential function of trans-translation. The protein is SsrA-binding protein of Chlorobium phaeovibrioides (strain DSM 265 / 1930) (Prosthecochloris vibrioformis (strain DSM 265)).